The chain runs to 149 residues: Small ribosomal subunit protein uS17c (149 aa).

Residues 1–49 constitute a chloroplast transit peptide; that stretch reads MITSSLTSSLQALKLSSPFAHGSTPLSSLSKPNSFPNHRMPALVPVIRA.

The protein belongs to the universal ribosomal protein uS17 family. In terms of assembly, part of the 30S ribosomal subunit.

Its subcellular location is the plastid. It localises to the chloroplast. One of the primary rRNA binding proteins, it binds specifically to the 5'-end of 16S ribosomal RNA. Required for optimal plastid performance in terms of photosynthesis and growth. Required for the translation of plastid mRNAs. Plays a critical role in biosynthesis of thylakoid membrane proteins encoded by chloroplast genes. This chain is Small ribosomal subunit protein uS17c (RPS17), found in Arabidopsis thaliana (Mouse-ear cress).